The sequence spans 355 residues: UDP-glucose 4-epimerase uge1 (355 aa).

8 to 39 (TVLVTGGAGYIGSHTCVVLLEKGYDVVIVDNL) lines the NAD(+) pocket.

Belongs to the NAD(P)-dependent epimerase/dehydratase family. Requires NAD(+) as cofactor.

It carries out the reaction UDP-alpha-D-glucose = UDP-alpha-D-galactose. It participates in carbohydrate metabolism; galactose metabolism. In terms of biological role, major UDP-glucose/-galactose 4-epimerase under glucose-rich conditions involved in protein galactosylation. This chain is UDP-glucose 4-epimerase uge1 (uge1), found in Schizosaccharomyces pombe (strain 972 / ATCC 24843) (Fission yeast).